Here is a 377-residue protein sequence, read N- to C-terminus: Anhydro-N-acetylmuramic acid kinase (377 aa).

19 to 26 (GTSLDGVD) serves as a coordination point for ATP.

It belongs to the anhydro-N-acetylmuramic acid kinase family.

The enzyme catalyses 1,6-anhydro-N-acetyl-beta-muramate + ATP + H2O = N-acetyl-D-muramate 6-phosphate + ADP + H(+). The protein operates within amino-sugar metabolism; 1,6-anhydro-N-acetylmuramate degradation. It participates in cell wall biogenesis; peptidoglycan recycling. Catalyzes the specific phosphorylation of 1,6-anhydro-N-acetylmuramic acid (anhMurNAc) with the simultaneous cleavage of the 1,6-anhydro ring, generating MurNAc-6-P. Is required for the utilization of anhMurNAc either imported from the medium or derived from its own cell wall murein, and thus plays a role in cell wall recycling. This is Anhydro-N-acetylmuramic acid kinase from Roseobacter denitrificans (strain ATCC 33942 / OCh 114) (Erythrobacter sp. (strain OCh 114)).